A 913-amino-acid chain; its full sequence is Calcium-activated chloride channel regulator 1 (913 aa).

The N-terminal stretch at 1 to 21 (MGPFKSSVFILILHLLEGALS) is a signal peptide. The tract at residues 46–199 (DETLIQQIKD…GITGKIEVNK (154 aa)) is metalloprotease domain. His156 contacts Zn(2+). Glu157 is an active-site residue. Residues His160 and Asp167 each coordinate Zn(2+). The 170-residue stretch at 306–475 (IVCLVLDKSG…NGLIDAFGAL (170 aa)) folds into the VWFA domain. N-linked (GlcNAc...) asparagine glycans are attached at residues Asn503, Asn769, Asn803, Asn809, Asn830, Asn835, Asn885, and Asn889. Positions 866–885 (PPQTPPETPSPDETSAPCPN) are disordered.

Belongs to the CLCR family. Post-translationally, glycosylated. In terms of processing, the translation product is autoproteolytically cleaved by the metalloprotease domain in the endoplasmic reticulum into a N-terminal and a C-terminal products that remain physically associated with each other. The cleavage is necessary for calcium-activated chloride channel (CaCC) activation activity.

Its subcellular location is the secreted. The protein resides in the extracellular space. Its function is as follows. May be involved in mediating calcium-activated chloride conductance. May play critical roles in goblet cell metaplasia, mucus hypersecretion, cystic fibrosis and AHR. May be involved in the regulation of mucus production and/or secretion by goblet cells. Involved in the regulation of tissue inflammation in the innate immune response. May play a role as a tumor suppressor. Induces MUC5AC. In Macaca mulatta (Rhesus macaque), this protein is Calcium-activated chloride channel regulator 1 (CLCA1).